Reading from the N-terminus, the 171-residue chain is 3-hydroxydecanoyl-[acyl-carrier-protein] dehydratase (171 aa).

The active site involves His-70.

It belongs to the thioester dehydratase family. FabA subfamily. As to quaternary structure, homodimer.

It localises to the cytoplasm. It catalyses the reaction a (3R)-hydroxyacyl-[ACP] = a (2E)-enoyl-[ACP] + H2O. The enzyme catalyses (3R)-hydroxydecanoyl-[ACP] = (2E)-decenoyl-[ACP] + H2O. The catalysed reaction is (2E)-decenoyl-[ACP] = (3Z)-decenoyl-[ACP]. The protein operates within lipid metabolism; fatty acid biosynthesis. Its function is as follows. Necessary for the introduction of cis unsaturation into fatty acids. Catalyzes the dehydration of (3R)-3-hydroxydecanoyl-ACP to E-(2)-decenoyl-ACP and then its isomerization to Z-(3)-decenoyl-ACP. Can catalyze the dehydratase reaction for beta-hydroxyacyl-ACPs with saturated chain lengths up to 16:0, being most active on intermediate chain length. In Shewanella woodyi (strain ATCC 51908 / MS32), this protein is 3-hydroxydecanoyl-[acyl-carrier-protein] dehydratase.